The chain runs to 155 residues: SsrA-binding protein (155 aa).

A compositionally biased stretch (basic and acidic residues) spans 123–142 (DLHDKRETEKKRDWEREKGQ). The tract at residues 123 to 155 (DLHDKRETEKKRDWEREKGQLMRHKISSPRKDT) is disordered. Residues 143–155 (LMRHKISSPRKDT) show a composition bias toward basic residues.

This sequence belongs to the SmpB family.

It localises to the cytoplasm. Its function is as follows. Required for rescue of stalled ribosomes mediated by trans-translation. Binds to transfer-messenger RNA (tmRNA), required for stable association of tmRNA with ribosomes. tmRNA and SmpB together mimic tRNA shape, replacing the anticodon stem-loop with SmpB. tmRNA is encoded by the ssrA gene; the 2 termini fold to resemble tRNA(Ala) and it encodes a 'tag peptide', a short internal open reading frame. During trans-translation Ala-aminoacylated tmRNA acts like a tRNA, entering the A-site of stalled ribosomes, displacing the stalled mRNA. The ribosome then switches to translate the ORF on the tmRNA; the nascent peptide is terminated with the 'tag peptide' encoded by the tmRNA and targeted for degradation. The ribosome is freed to recommence translation, which seems to be the essential function of trans-translation. The protein is SsrA-binding protein of Methylibium petroleiphilum (strain ATCC BAA-1232 / LMG 22953 / PM1).